Here is a 471-residue protein sequence, read N- to C-terminus: Variant surface glycoprotein ILTAT 1.1BC (471 aa).

An N-terminal signal peptide occupies residues 1-21 (MVKAIASLMLLHIWAIEEIKA). Asn130 carries N-linked (GlcNAc...) asparagine glycosylation. Residues 158 to 168 (TVSKTTECNTE) show a composition bias toward polar residues. Disordered regions lie at residues 158 to 183 (TVSK…TLSK) and 204 to 232 (GGAC…TTAS). Over residues 214–226 (DKIHITNETDSKN) the composition is skewed to basic and acidic residues. N-linked (GlcNAc...) asparagine glycans are attached at residues Asn220 and Asn260. Intrachain disulfides connect Cys397-Cys410 and Cys406-Cys421. Residues 432 to 454 (AEQAATNQETEGKDGKTTNTTGS) are disordered. Asn450 carries N-linked (GlcNAc...) asparagine glycosylation. Ser454 carries GPI-anchor amidated serine lipidation. Residues 455-471 (NSFLINKAPVLLAFLLL) constitute a propeptide, removed in mature form.

The protein resides in the cell membrane. In terms of biological role, VSG forms a coat on the surface of the parasite. The trypanosome evades the immune response of the host by expressing a series of antigenically distinct VSGs from an estimated 1000 VSG genes. This Trypanosoma brucei brucei protein is Variant surface glycoprotein ILTAT 1.1BC.